We begin with the raw amino-acid sequence, 951 residues long: Valine--tRNA ligase (951 aa).

Residues 42–52 carry the 'HIGH' region motif; the sequence is PNVTGSLHMGH. The 'KMSKS' region motif lies at 554-558; the sequence is KMSKS. Position 557 (Lys557) interacts with ATP. The stretch at 880–944 forms a coiled coil; it reads AGLINKEDEL…AEAKAKLIEQ (65 aa).

This sequence belongs to the class-I aminoacyl-tRNA synthetase family. ValS type 1 subfamily. In terms of assembly, monomer.

It localises to the cytoplasm. The enzyme catalyses tRNA(Val) + L-valine + ATP = L-valyl-tRNA(Val) + AMP + diphosphate. In terms of biological role, catalyzes the attachment of valine to tRNA(Val). As ValRS can inadvertently accommodate and process structurally similar amino acids such as threonine, to avoid such errors, it has a 'posttransfer' editing activity that hydrolyzes mischarged Thr-tRNA(Val) in a tRNA-dependent manner. The chain is Valine--tRNA ligase from Escherichia coli O6:H1 (strain CFT073 / ATCC 700928 / UPEC).